A 375-amino-acid chain; its full sequence is Chaperone protein DnaJ (375 aa).

Positions 4 to 68 (DYYETLGVDR…ETRARYDQFG (65 aa)) constitute a J domain. Residues 134 to 216 (GGEKEIRIPH…CGGAGRKQET (83 aa)) form a CR-type zinc finger. 8 residues coordinate Zn(2+): Cys147, Cys150, Cys164, Cys167, Cys190, Cys193, Cys204, and Cys207. 4 CXXCXGXG motif repeats span residues 147 to 154 (CQVCNGSG), 164 to 171 (CSTCNGAG), 190 to 197 (CPDCNGAG), and 204 to 211 (CDACGGAG).

The protein belongs to the DnaJ family. In terms of assembly, homodimer. The cofactor is Zn(2+).

The protein localises to the cytoplasm. Functionally, participates actively in the response to hyperosmotic and heat shock by preventing the aggregation of stress-denatured proteins and by disaggregating proteins, also in an autonomous, DnaK-independent fashion. Unfolded proteins bind initially to DnaJ; upon interaction with the DnaJ-bound protein, DnaK hydrolyzes its bound ATP, resulting in the formation of a stable complex. GrpE releases ADP from DnaK; ATP binding to DnaK triggers the release of the substrate protein, thus completing the reaction cycle. Several rounds of ATP-dependent interactions between DnaJ, DnaK and GrpE are required for fully efficient folding. Also involved, together with DnaK and GrpE, in the DNA replication of plasmids through activation of initiation proteins. In Rippkaea orientalis (strain PCC 8801 / RF-1) (Cyanothece sp. (strain PCC 8801)), this protein is Chaperone protein DnaJ.